The sequence spans 386 residues: D-amino-acid oxidase (386 aa).

Positions 14, 15, 16, 17, 39, 40, 51, 52, and 53 each coordinate FAD. The segment at 109–138 (SSSPPHPLLPPWVDPSASAAPPRELGTPDT) is disordered. Positions 112-121 (PPHPLLPPWV) are enriched in pro residues. FAD is bound by residues R174, V175, and A176. Y253, Y261, and K332 together coordinate D-serine. Positions 261 and 332 each coordinate D-proline. The FAD site is built by K332, G344, I345, G362, and A364. K332 lines the D-dopa pocket. Residue G362 participates in D-serine binding. G362 provides a ligand contact to D-proline. G362 serves as a coordination point for D-dopa.

The protein belongs to the DAMOX/DASOX family.

It catalyses the reaction a D-alpha-amino acid + O2 + H2O = a 2-oxocarboxylate + H2O2 + NH4(+). It carries out the reaction D-alanine + O2 + H2O = pyruvate + H2O2 + NH4(+). The enzyme catalyses D-aspartate + O2 + H2O = oxaloacetate + H2O2 + NH4(+). Catalyzes the oxidative deamination of D-amino acids with broad substrate specificity. Enables the organism to utilize D-amino acids as a source of nutrients. This chain is D-amino-acid oxidase, found in Zea mays (Maize).